The primary structure comprises 85 residues: MDISRTEQRILHLMAQGGRIEITRDDDRKIEAVSCFTRDGWLYPGVDLDLFRRLKRLRAIKSSGGQPYRITERGLRLVRSQLNNR.

It belongs to the UPF0386 family.

The protein is UPF0386 protein RL2079 of Rhizobium johnstonii (strain DSM 114642 / LMG 32736 / 3841) (Rhizobium leguminosarum bv. viciae).